The chain runs to 432 residues: Adenylosuccinate synthetase (432 aa).

Residues 12–18 and 40–42 contribute to the GTP site; these read GDEGKGK and GHT. The Proton acceptor role is filled by D13. Positions 13 and 40 each coordinate Mg(2+). Residues 13-16, 38-41, T129, R143, Q224, T239, and R303 each bind IMP; these read DEGK and NAGH. H41 functions as the Proton donor in the catalytic mechanism. Residue 299 to 305 participates in substrate binding; the sequence is VTTGRRR. GTP contacts are provided by residues R305, 331-333, and 413-415; these read KLD and GVG.

This sequence belongs to the adenylosuccinate synthetase family. As to quaternary structure, homodimer. Mg(2+) serves as cofactor.

Its subcellular location is the cytoplasm. It carries out the reaction IMP + L-aspartate + GTP = N(6)-(1,2-dicarboxyethyl)-AMP + GDP + phosphate + 2 H(+). It functions in the pathway purine metabolism; AMP biosynthesis via de novo pathway; AMP from IMP: step 1/2. Functionally, plays an important role in the de novo pathway of purine nucleotide biosynthesis. Catalyzes the first committed step in the biosynthesis of AMP from IMP. This is Adenylosuccinate synthetase from Mycobacterium avium (strain 104).